Reading from the N-terminus, the 709-residue chain is RxLR effector protein PITG_15110 (709 aa).

The signal sequence occupies residues 1–18 (MHAYSAAVLMGLLMVAEG). Residues 51–66 (RLLREPETTEASNEDR) carry the RxLR-dEER motif.

Belongs to the RxLR effector family.

It is found in the secreted. It localises to the host cytoplasm. The protein resides in the host cytoskeleton. Effector that enhances P.infestans colonization of Nicotiana benthamiana leaves. In Phytophthora infestans (strain T30-4) (Potato late blight agent), this protein is RxLR effector protein PITG_15110.